A 347-amino-acid chain; its full sequence is Phosphoribosylformylglycinamidine cyclo-ligase (347 aa).

The protein belongs to the AIR synthase family.

The protein resides in the cytoplasm. It carries out the reaction 2-formamido-N(1)-(5-O-phospho-beta-D-ribosyl)acetamidine + ATP = 5-amino-1-(5-phospho-beta-D-ribosyl)imidazole + ADP + phosphate + H(+). It participates in purine metabolism; IMP biosynthesis via de novo pathway; 5-amino-1-(5-phospho-D-ribosyl)imidazole from N(2)-formyl-N(1)-(5-phospho-D-ribosyl)glycinamide: step 2/2. The chain is Phosphoribosylformylglycinamidine cyclo-ligase from Syntrophus aciditrophicus (strain SB).